Reading from the N-terminus, the 460-residue chain is UDP-N-acetylmuramoylalanine--D-glutamate ligase (460 aa).

An ATP-binding site is contributed by 120 to 126; sequence GSNGKTT.

This sequence belongs to the MurCDEF family.

It localises to the cytoplasm. It catalyses the reaction UDP-N-acetyl-alpha-D-muramoyl-L-alanine + D-glutamate + ATP = UDP-N-acetyl-alpha-D-muramoyl-L-alanyl-D-glutamate + ADP + phosphate + H(+). The protein operates within cell wall biogenesis; peptidoglycan biosynthesis. Cell wall formation. Catalyzes the addition of glutamate to the nucleotide precursor UDP-N-acetylmuramoyl-L-alanine (UMA). This Lactobacillus delbrueckii subsp. bulgaricus (strain ATCC BAA-365 / Lb-18) protein is UDP-N-acetylmuramoylalanine--D-glutamate ligase.